We begin with the raw amino-acid sequence, 490 residues long: Mitochondrial-processing peptidase subunit beta (490 aa).

Residues 1–46 (MAAAAVARAVLFSAARRRLCGFTERLLIGGAAGRSLYFGGNRLRST) constitute a mitochondrion transit peptide. Position 102 (histidine 102) interacts with Zn(2+). The active-site Proton acceptor is glutamate 105. The Zn(2+) site is built by histidine 106 and glutamate 182.

This sequence belongs to the peptidase M16 family. As to quaternary structure, heterodimer of PMPCA (alpha) and PMPCB (beta) subunits, forming the mitochondrial processing protease (MPP) in which PMPCA is involved in substrate recognition and binding and PMPCB is the catalytic subunit. The cofactor is Zn(2+).

The protein localises to the mitochondrion matrix. The enzyme catalyses Release of N-terminal transit peptides from precursor proteins imported into the mitochondrion, typically with Arg in position P2.. With respect to regulation, binding to PMPCA is required for catalytic activity. Functionally, catalytic subunit of the essential mitochondrial processing protease (MPP), which cleaves the mitochondrial sequence off newly imported precursors proteins. Preferentially, cleaves after an arginine at position P2. Required for PINK1 turnover by coupling PINK1 mitochondrial import and cleavage, which results in subsequent PINK1 proteolysis. This chain is Mitochondrial-processing peptidase subunit beta (PMPCB), found in Bos taurus (Bovine).